A 98-amino-acid chain; its full sequence is NADH-ubiquinone oxidoreductase chain 4L (98 aa).

The next 3 membrane-spanning stretches (helical) occupy residues 1 to 21 (MLAI…GVLV), 25 to 45 (HLMS…ILMT), and 57 to 79 (SMAP…ALLV).

Belongs to the complex I subunit 4L family. Core subunit of respiratory chain NADH dehydrogenase (Complex I) which is composed of 45 different subunits.

It is found in the mitochondrion inner membrane. The enzyme catalyses a ubiquinone + NADH + 5 H(+)(in) = a ubiquinol + NAD(+) + 4 H(+)(out). Functionally, core subunit of the mitochondrial membrane respiratory chain NADH dehydrogenase (Complex I) which catalyzes electron transfer from NADH through the respiratory chain, using ubiquinone as an electron acceptor. Part of the enzyme membrane arm which is embedded in the lipid bilayer and involved in proton translocation. The chain is NADH-ubiquinone oxidoreductase chain 4L (MT-ND4L) from Dasyurus hallucatus (Northern quoll).